Here is a 169-residue protein sequence, read N- to C-terminus: MRDAVTSLIKNYDVAGRYFDRNAIDTLKDYFDSGTARVQAAAAINSNAAALVKQAGSKLFEELPELIRPGGNAYTTRRLAACLRDMDYYLRYATYALVAGNTNVLDERVLQGLRETYNSLGVPIGPTVRGVQILKDLVKEQVAGAGIANTTFVEEPFDHITRELSERDV.

At Asn72 the chain carries N4-methylasparagine. Cys82 is a (2R,3E)-phycocyanobilin binding site.

The protein belongs to the phycobiliprotein family. In terms of assembly, heterodimer of ApcE and this beta chain. Post-translationally, contains one covalently linked bilin chromophore. The chromophore is added by phycocyanobilin lyase CpcS 1.

Its subcellular location is the cellular thylakoid membrane. Its function is as follows. A variant beta-allophycocyanin (AP) which forms a complex with ApcE, a phycobilisome terminal emitter that influences energy transfer to photosystem II. This chain is Allophycocyanin subunit beta-18 (apcF), found in Nostoc sp. (strain PCC 7120 / SAG 25.82 / UTEX 2576).